Consider the following 99-residue polypeptide: L-rhamnose mutarotase (99 aa).

Position 18 (Tyr-18) interacts with substrate. The Proton donor role is filled by His-22. Substrate contacts are provided by residues Tyr-41 and 76–77; that span reads WW.

It belongs to the rhamnose mutarotase family. As to quaternary structure, homodimer.

It is found in the cytoplasm. It catalyses the reaction alpha-L-rhamnose = beta-L-rhamnose. It participates in carbohydrate metabolism; L-rhamnose metabolism. Involved in the anomeric conversion of L-rhamnose. The protein is L-rhamnose mutarotase of Shigella boydii serotype 18 (strain CDC 3083-94 / BS512).